A 352-amino-acid chain; its full sequence is GTPase Obg (352 aa).

An Obg domain is found at 1–159 (MHFLDQAKIY…MWVWLRLKLL (159 aa)). The OBG-type G domain maps to 160–327 (ADVGLLGLPN…LLDAVLGYLP (168 aa)). Residues 166–173 (GLPNAGKS), 191–195 (FTTLV), 212–215 (DIPG), 279–282 (NKLD), and 308–310 (SGA) contribute to the GTP site. Mg(2+)-binding residues include Ser-173 and Thr-193. The interval 329-352 (STSTETKGSEVEEVDEEGGEWSPI) is disordered. Residues 339-352 (VEEVDEEGGEWSPI) are compositionally biased toward acidic residues.

Belongs to the TRAFAC class OBG-HflX-like GTPase superfamily. OBG GTPase family. Monomer. Mg(2+) is required as a cofactor.

Its subcellular location is the cytoplasm. In terms of biological role, an essential GTPase which binds GTP, GDP and possibly (p)ppGpp with moderate affinity, with high nucleotide exchange rates and a fairly low GTP hydrolysis rate. Plays a role in control of the cell cycle, stress response, ribosome biogenesis and in those bacteria that undergo differentiation, in morphogenesis control. The chain is GTPase Obg from Erythrobacter litoralis (strain HTCC2594).